The following is a 238-amino-acid chain: ATP-dependent dethiobiotin synthetase BioD (238 aa).

13–18 (EIGKTV) contributes to the ATP binding site. Residue Thr17 participates in Mg(2+) binding. Lys38 is an active-site residue. Thr42 lines the substrate pocket. 2 residues coordinate Mg(2+): Arg59 and Glu111. ATP-binding positions include 111–114 (EGAG), 175–176 (NQ), and 204–206 (PLL).

Belongs to the dethiobiotin synthetase family. Homodimer. Mg(2+) is required as a cofactor.

It localises to the cytoplasm. It carries out the reaction (7R,8S)-7,8-diammoniononanoate + CO2 + ATP = (4R,5S)-dethiobiotin + ADP + phosphate + 3 H(+). Its pathway is cofactor biosynthesis; biotin biosynthesis; biotin from 7,8-diaminononanoate: step 1/2. Functionally, catalyzes a mechanistically unusual reaction, the ATP-dependent insertion of CO2 between the N7 and N8 nitrogen atoms of 7,8-diaminopelargonic acid (DAPA, also called 7,8-diammoniononanoate) to form a ureido ring. The chain is ATP-dependent dethiobiotin synthetase BioD from Geobacillus kaustophilus (strain HTA426).